The following is a 217-amino-acid chain: MQDTTLHIRHLGKQDYESVWHAMQHYTDTRDSESHDELWIVEHPPVFTQGQAGKSEHILNAGDIPVIQVDRGGQVTYHGPGQLVVYPLLDIKRSKVGVRQLVTHIEQSIVDMLAKYDINAYAKADAPGVYVDERKIASLGLRIRKGCSFHGLALNVDMDLAPFRRINPCGYAGLEMVQCKALGGPQTVIEAGEQLTITFSQLLGYQHLVHHQGLAAS.

The BPL/LPL catalytic domain maps to S32 to H207. Substrate contacts are provided by residues R71–H78, S138–G140, and G151–A153. C169 acts as the Acyl-thioester intermediate in catalysis.

This sequence belongs to the LipB family.

It is found in the cytoplasm. The catalysed reaction is octanoyl-[ACP] + L-lysyl-[protein] = N(6)-octanoyl-L-lysyl-[protein] + holo-[ACP] + H(+). The protein operates within protein modification; protein lipoylation via endogenous pathway; protein N(6)-(lipoyl)lysine from octanoyl-[acyl-carrier-protein]: step 1/2. Catalyzes the transfer of endogenously produced octanoic acid from octanoyl-acyl-carrier-protein onto the lipoyl domains of lipoate-dependent enzymes. Lipoyl-ACP can also act as a substrate although octanoyl-ACP is likely to be the physiological substrate. In Shewanella baltica (strain OS155 / ATCC BAA-1091), this protein is Octanoyltransferase.